The primary structure comprises 674 residues: Probable copper-transporting P-type ATPase B (674 aa).

Residues 1–20 (MNHSNHMHHDNHESHHHYSG) form a disordered region. The next 6 helical transmembrane spans lie at 32–52 (FFVS…MGVN), 57–77 (FTFP…FFYG), 95–115 (GMMT…LYAF), 127–147 (TMDF…GHWI), 284–304 (GYLF…WMLI), and 315–335 (LVTV…PLVT). The active-site 4-aspartylphosphate intermediate is the D367. 2 residues coordinate Mg(2+): D565 and D569. The next 2 helical transmembrane spans lie at 623–645 (LWWG…AFIG) and 649–671 (SPAV…AFTL).

It belongs to the cation transport ATPase (P-type) (TC 3.A.3) family. Type IB subfamily.

It is found in the cell membrane. It catalyses the reaction Cu(+)(in) + ATP + H2O = Cu(+)(out) + ADP + phosphate + H(+). Involved in copper transport. In Staphylococcus haemolyticus (strain JCSC1435), this protein is Probable copper-transporting P-type ATPase B (copB).